Here is a 290-residue protein sequence, read N- to C-terminus: ATP synthase gamma chain (290 aa).

This sequence belongs to the ATPase gamma chain family. In terms of assembly, F-type ATPases have 2 components, CF(1) - the catalytic core - and CF(0) - the membrane proton channel. CF(1) has five subunits: alpha(3), beta(3), gamma(1), delta(1), epsilon(1). CF(0) has three main subunits: a, b and c.

The protein localises to the cell inner membrane. Its function is as follows. Produces ATP from ADP in the presence of a proton gradient across the membrane. The gamma chain is believed to be important in regulating ATPase activity and the flow of protons through the CF(0) complex. This chain is ATP synthase gamma chain, found in Paracoccus denitrificans (strain Pd 1222).